A 582-amino-acid polypeptide reads, in one-letter code: PX domain-containing protein kinase-like protein (582 aa).

A PX domain is found at 14–126; that stretch reads LDDTVPLTAA…KFLDPNNYSA (113 aa). The 394-residue stretch at 88-481 folds into the Protein kinase domain; it reads FIAERQRGLQ…VENSEEQPVK (394 aa). The segment at 433-550 is disordered; sequence EQKQIHQHRR…APFLPQPVNG (118 aa). Composition is skewed to basic residues over residues 437–448 and 457–469; these read IHQHRRLTRAQS and KRRK…KSKR. Residues 483-514 are compositionally biased toward low complexity; it reads SNSNNSAGSGASSPLTSPSSPTPPSTAGLSSA. Pro residues predominate over residues 515-531; that stretch reads LPPPPPPPPPPPPPAGP. Residues 548–567 form the WH2 domain; sequence VNGVNRGALLSSIQNFQKGT.

It belongs to the protein kinase superfamily. In terms of tissue distribution, isoform 1 is present in all tissues examined. Isoform 2 is found in all tissues except skeletal muscle and very low levels in spleen. Both isoforms are widely expressed throughout the nervous system however levels of isoform 2 are higher in purified hippocampal and cortical neurons whereas glial cells express more isoform 1 than isoform 2.

It localises to the cytoplasm. The protein resides in the cell membrane. Its function is as follows. Binds to and modulates brain Na,K-ATPase subunits ATP1B1 and ATP1B3 and may thereby participate in the regulation of electrical excitability and synaptic transmission. May not display kinase activity. In Mus musculus (Mouse), this protein is PX domain-containing protein kinase-like protein.